The chain runs to 279 residues: Putative pyruvate, phosphate dikinase regulatory protein (279 aa).

153–160 contributes to the ADP binding site; sequence GVSRTSKT.

This sequence belongs to the pyruvate, phosphate/water dikinase regulatory protein family. PDRP subfamily.

It carries out the reaction N(tele)-phospho-L-histidyl/L-threonyl-[pyruvate, phosphate dikinase] + ADP = N(tele)-phospho-L-histidyl/O-phospho-L-threonyl-[pyruvate, phosphate dikinase] + AMP + H(+). The catalysed reaction is N(tele)-phospho-L-histidyl/O-phospho-L-threonyl-[pyruvate, phosphate dikinase] + phosphate + H(+) = N(tele)-phospho-L-histidyl/L-threonyl-[pyruvate, phosphate dikinase] + diphosphate. Functionally, bifunctional serine/threonine kinase and phosphorylase involved in the regulation of the pyruvate, phosphate dikinase (PPDK) by catalyzing its phosphorylation/dephosphorylation. The polypeptide is Putative pyruvate, phosphate dikinase regulatory protein (Rhodopseudomonas palustris (strain ATCC BAA-98 / CGA009)).